The primary structure comprises 450 residues: Gluconate permease (450 aa).

Helical transmembrane passes span 6–26, 30–50, 60–80, 116–136, 142–162, 183–203, 233–253, 269–289, 312–332, 338–358, 366–386, and 430–450; these read HDAYLLLDALVTIIGLIVLIT, VHPFIALIIAAGFLGLTSGMP, DGFGGVLGFVGVILALGTMLG, VGIPLFFEIGFILLIPLVFIV, VSLIKIGIPLLAGLSAVHGLV, ILYGLIVALPTAAIAGPLFGA, FGVTLATVLLPVFLMLLKTFA, MIGHPISALLLALLVALYTFG, AIVMIIGAGGGFKQMLVASGV, HLAVNAQISPILLAWLVAAVI, TVATITGAGIVVPVIDLIPGV, and AMETILSVVGLVFILLLSLVL.

It belongs to the GntP permease family.

It localises to the cell inner membrane. Its pathway is carbohydrate acid metabolism; D-gluconate degradation. The polypeptide is Gluconate permease (gnuT) (Pseudomonas aeruginosa (strain ATCC 15692 / DSM 22644 / CIP 104116 / JCM 14847 / LMG 12228 / 1C / PRS 101 / PAO1)).